The primary structure comprises 242 residues: Lysosomal membrane ascorbate-dependent ferrireductase CYB561A3 (242 aa).

The Cytoplasmic portion of the chain corresponds to 1 to 7 (MVSGRFY). A helical membrane pass occupies residues 8-28 (LSCLLLGSLGSMCILFTIYWM). The Cytochrome b561 domain occupies 12–219 (LLGSLGSMCI…FGLLVLYILL (208 aa)). Topologically, residues 29–45 (QYWRGGFAWNGSIYMFN) are lumenal. The N-linked (GlcNAc...) asparagine glycan is linked to asparagine 38. The helical transmembrane segment at 46 to 66 (WHPVLMVAGMVVFYGGASLVY) threads the bilayer. Positions 47 and 67 each coordinate heme b. Residues 67–83 (RLPQSWVGPKLPWKLLH) are Cytoplasmic-facing. L-ascorbate-binding residues include lysine 76 and lysine 80. A heme b-binding site is contributed by histidine 83. A helical transmembrane segment spans residues 84–104 (AALHLMAFVLTVVGLVAVFTF). Residues 105 to 119 (HNHGRTANLYSLHSW) lie on the Lumenal side of the membrane. Residues 112 to 115 (NLYS) and histidine 117 each bind heme b. Residues 120 to 140 (LGITTVFLFACQWFLGFAVFL) traverse the membrane as a helical segment. Residues 141–154 (LPWASMWLRSLLKP) lie on the Cytoplasmic side of the membrane. Arginine 149 contributes to the L-ascorbate binding site. Residues 155 to 175 (IHVFFGAAILSLSIASVISGI) form a helical membrane-spanning segment. Heme b-binding residues include histidine 156 and glutamate 177. At 176–202 (NEKLFFSLKNTTRPYHSLPSEAVFANS) the chain is on the lumenal side. A helical transmembrane segment spans residues 203-223 (TGMLVVAFGLLVLYILLASSW). Lysine 224 serves as a coordination point for heme b. At 224–242 (KRPEPGILTDRQPLLHDGE) the chain is on the cytoplasmic side.

As to quaternary structure, homodimer. It depends on heme b as a cofactor. Post-translationally, N-glycosylated.

Its subcellular location is the late endosome membrane. The protein localises to the lysosome membrane. It catalyses the reaction Fe(3+)(out) + L-ascorbate(in) = monodehydro-L-ascorbate radical(in) + Fe(2+)(out) + H(+). Its function is as follows. Transmembrane reductase that uses ascorbate as an electron donor in the cytoplasm and transfers electrons across membranes to reduce iron cations Fe(3+) into Fe(2+) in the lumen of the late endosome and lysosome. Reduced iron can then be extruded from the late endosome and lysosome to the cytoplasm by divalent metal-specific transporters. It is therefore most probably involved in endosomal and lysosomal cellular iron homeostasis. The chain is Lysosomal membrane ascorbate-dependent ferrireductase CYB561A3 from Homo sapiens (Human).